The following is a 327-amino-acid chain: Quinone oxidoreductase (327 aa).

It belongs to the zinc-containing alcohol dehydrogenase family. Quinone oxidoreductase subfamily. As to quaternary structure, homodimer.

The enzyme catalyses 2 a quinone + NADPH + H(+) = 2 a 1,4-benzosemiquinone + NADP(+). The polypeptide is Quinone oxidoreductase (qor) (Salmonella typhimurium (strain LT2 / SGSC1412 / ATCC 700720)).